We begin with the raw amino-acid sequence, 446 residues long: 3-phosphoshikimate 1-carboxyvinyltransferase (446 aa).

Residues K30, S31, and R35 each coordinate 3-phosphoshikimate. K30 contributes to the phosphoenolpyruvate binding site. The phosphoenolpyruvate site is built by G112 and R140. Positions 186, 187, 188, 215, 334, and 361 each coordinate 3-phosphoshikimate. Q188 lines the phosphoenolpyruvate pocket. Catalysis depends on E334, which acts as the Proton acceptor. Positions 365, 406, and 431 each coordinate phosphoenolpyruvate.

Belongs to the EPSP synthase family. In terms of assembly, monomer.

The protein localises to the cytoplasm. It catalyses the reaction 3-phosphoshikimate + phosphoenolpyruvate = 5-O-(1-carboxyvinyl)-3-phosphoshikimate + phosphate. It participates in metabolic intermediate biosynthesis; chorismate biosynthesis; chorismate from D-erythrose 4-phosphate and phosphoenolpyruvate: step 6/7. Catalyzes the transfer of the enolpyruvyl moiety of phosphoenolpyruvate (PEP) to the 5-hydroxyl of shikimate-3-phosphate (S3P) to produce enolpyruvyl shikimate-3-phosphate and inorganic phosphate. The sequence is that of 3-phosphoshikimate 1-carboxyvinyltransferase from Streptomyces avermitilis (strain ATCC 31267 / DSM 46492 / JCM 5070 / NBRC 14893 / NCIMB 12804 / NRRL 8165 / MA-4680).